Here is a 67-residue protein sequence, read N- to C-terminus: uncharacterized protein (67 aa).

This is an uncharacterized protein from Fowlpox virus (strain NVSL) (FPV).